The chain runs to 162 residues: Phosphopantetheine adenylyltransferase (162 aa).

Threonine 10 is a substrate binding site. ATP is bound by residues 10-11 and histidine 18; that span reads TF. 3 residues coordinate substrate: lysine 42, leucine 74, and arginine 88. Residues 89–91, glutamate 99, and 124–130 contribute to the ATP site; these read GLR and YAFLSSS.

The protein belongs to the bacterial CoaD family. Homohexamer. Mg(2+) serves as cofactor.

The protein localises to the cytoplasm. The catalysed reaction is (R)-4'-phosphopantetheine + ATP + H(+) = 3'-dephospho-CoA + diphosphate. The protein operates within cofactor biosynthesis; coenzyme A biosynthesis; CoA from (R)-pantothenate: step 4/5. Reversibly transfers an adenylyl group from ATP to 4'-phosphopantetheine, yielding dephospho-CoA (dPCoA) and pyrophosphate. The sequence is that of Phosphopantetheine adenylyltransferase from Methylococcus capsulatus (strain ATCC 33009 / NCIMB 11132 / Bath).